A 235-amino-acid polypeptide reads, in one-letter code: Carbohydrate deacetylase (235 aa).

Mg(2+)-binding residues include H61 and H124.

This sequence belongs to the YdjC deacetylase family. The cofactor is Mg(2+).

In terms of biological role, probably catalyzes the deacetylation of acetylated carbohydrates an important step in the degradation of oligosaccharides. The chain is Carbohydrate deacetylase from Bacillus cereus (strain 03BB102).